Consider the following 495-residue polypeptide: UDP-N-acetylmuramoyl-L-alanyl-D-glutamate--2,6-diaminopimelate ligase (495 aa).

Ser-29 provides a ligand contact to UDP-N-acetyl-alpha-D-muramoyl-L-alanyl-D-glutamate. 111–117 (GTNGKTS) is a binding site for ATP. UDP-N-acetyl-alpha-D-muramoyl-L-alanyl-D-glutamate is bound by residues 153-154 (TT), Ser-180, Gln-186, and Arg-188. Position 220 is an N6-carboxylysine (Lys-220). Meso-2,6-diaminopimelate contacts are provided by residues Arg-384, 408–411 (DNPR), Gly-459, and Glu-463. Residues 408–411 (DNPR) carry the Meso-diaminopimelate recognition motif motif.

This sequence belongs to the MurCDEF family. MurE subfamily. The cofactor is Mg(2+). Carboxylation is probably crucial for Mg(2+) binding and, consequently, for the gamma-phosphate positioning of ATP.

It localises to the cytoplasm. It catalyses the reaction UDP-N-acetyl-alpha-D-muramoyl-L-alanyl-D-glutamate + meso-2,6-diaminopimelate + ATP = UDP-N-acetyl-alpha-D-muramoyl-L-alanyl-gamma-D-glutamyl-meso-2,6-diaminopimelate + ADP + phosphate + H(+). It functions in the pathway cell wall biogenesis; peptidoglycan biosynthesis. Functionally, catalyzes the addition of meso-diaminopimelic acid to the nucleotide precursor UDP-N-acetylmuramoyl-L-alanyl-D-glutamate (UMAG) in the biosynthesis of bacterial cell-wall peptidoglycan. The chain is UDP-N-acetylmuramoyl-L-alanyl-D-glutamate--2,6-diaminopimelate ligase from Xanthomonas campestris pv. campestris (strain 8004).